The chain runs to 680 residues: DNA-directed RNA polymerase subunit beta' (680 aa).

Positions 69, 71, 87, and 90 each coordinate Zn(2+). Asp-489, Asp-491, and Asp-493 together coordinate Mg(2+).

This sequence belongs to the RNA polymerase beta' chain family. RpoC1 subfamily. In terms of assembly, in plastids the minimal PEP RNA polymerase catalytic core is composed of four subunits: alpha, beta, beta', and beta''. When a (nuclear-encoded) sigma factor is associated with the core the holoenzyme is formed, which can initiate transcription. Requires Mg(2+) as cofactor. Zn(2+) is required as a cofactor.

The protein localises to the plastid. It is found in the chloroplast. The catalysed reaction is RNA(n) + a ribonucleoside 5'-triphosphate = RNA(n+1) + diphosphate. Its function is as follows. DNA-dependent RNA polymerase catalyzes the transcription of DNA into RNA using the four ribonucleoside triphosphates as substrates. The polypeptide is DNA-directed RNA polymerase subunit beta' (Lepidium virginicum (Virginia pepperweed)).